Here is a 276-residue protein sequence, read N- to C-terminus: MAAPTQLPETAKPKHSNQSEAGPAPLASPTAPMPRPASHLAPMPSDHPDFRSKSARLRCQPPRTNNCGTFKQPPSVAATSRPKPGNPFLQPPTKGTPPPKKKKKNHTEGCHTHEANPEPNTKHTETEPPIISHCPPPHPGPTATPNLLPCPNPTSSFCQNTRDSPSLPPQRPNMVHIPETPLQRRHSPSQIPIRIPPSPYNLSTAKTYYYLQPPYLPILSHEIHFIVPLLCPYEHHTHNRAARREPATLENNPRHRSIRLNYIPSHHVPHLRRRQF.

2 disordered regions span residues 1–132 (MAAP…PIIS) and 156–176 (SFCQ…NMVH). Over residues 106–126 (HTEGCHTHEANPEPNTKHTET) the composition is skewed to basic and acidic residues.

This sequence belongs to the UPF0328 family.

This Encephalitozoon cuniculi (strain GB-M1) (Microsporidian parasite) protein is UPF0328 protein ECU03_0010.